A 277-amino-acid polypeptide reads, in one-letter code: Phosphate import ATP-binding protein PstB 2 (277 aa).

The ABC transporter domain maps to 31–272; that stretch reads IEVPGLSLFY…PAKKQTEDYI (242 aa). An ATP-binding site is contributed by 63–70; that stretch reads GPSGCGKS.

It belongs to the ABC transporter superfamily. Phosphate importer (TC 3.A.1.7) family. As to quaternary structure, the complex is composed of two ATP-binding proteins (PstB), two transmembrane proteins (PstC and PstA) and a solute-binding protein (PstS).

The protein localises to the cell inner membrane. The catalysed reaction is phosphate(out) + ATP + H2O = ADP + 2 phosphate(in) + H(+). Part of the ABC transporter complex PstSACB involved in phosphate import. Responsible for energy coupling to the transport system. The polypeptide is Phosphate import ATP-binding protein PstB 2 (Pseudomonas syringae pv. tomato (strain ATCC BAA-871 / DC3000)).